Here is a 387-residue protein sequence, read N- to C-terminus: 1-deoxy-D-xylulose 5-phosphate reductoisomerase (387 aa).

NADPH contacts are provided by Thr-11, Gly-12, Ser-13, Ile-14, Gly-37, Arg-38, Asn-39, and Asn-125. Lys-126 is a 1-deoxy-D-xylulose 5-phosphate binding site. Residue Glu-127 coordinates NADPH. Asp-151 lines the Mn(2+) pocket. 1-deoxy-D-xylulose 5-phosphate is bound by residues Ser-152, Glu-153, Ser-177, and His-200. Residue Glu-153 participates in Mn(2+) binding. Gly-206 is an NADPH binding site. Residues Ser-213, Asn-218, Lys-219, and Glu-222 each coordinate 1-deoxy-D-xylulose 5-phosphate. Position 222 (Glu-222) interacts with Mn(2+).

The protein belongs to the DXR family. Requires Mg(2+) as cofactor. Mn(2+) serves as cofactor.

The enzyme catalyses 2-C-methyl-D-erythritol 4-phosphate + NADP(+) = 1-deoxy-D-xylulose 5-phosphate + NADPH + H(+). It participates in isoprenoid biosynthesis; isopentenyl diphosphate biosynthesis via DXP pathway; isopentenyl diphosphate from 1-deoxy-D-xylulose 5-phosphate: step 1/6. In terms of biological role, catalyzes the NADPH-dependent rearrangement and reduction of 1-deoxy-D-xylulose-5-phosphate (DXP) to 2-C-methyl-D-erythritol 4-phosphate (MEP). The protein is 1-deoxy-D-xylulose 5-phosphate reductoisomerase of Desulforamulus reducens (strain ATCC BAA-1160 / DSM 100696 / MI-1) (Desulfotomaculum reducens).